We begin with the raw amino-acid sequence, 1235 residues long: Insulin receptor substrate 1 (1235 aa).

Position 3 is a phosphoserine (Ser3). Residues 3–133 (SPPDTDGFSD…AGGGCGGSCS (131 aa)) form a mediates interaction with PHIP region. Positions 12–115 (DVRKVGYLRK…WYQALLQLHN (104 aa)) constitute a PH domain. Ser99 is modified (phosphoserine; by CK2). Residues 155-259 (FKEVWQVILK…EAMRAMSDEF (105 aa)) form the IRS-type PTB domain. Residues 258-425 (EFRPRTKSQS…SDGGFISSDE (168 aa)) are disordered. Phosphoserine; by RPS6KB1 occurs at positions 265 and 302. The segment covering 265 to 276 (SQSSSSCSNPIS) has biased composition (low complexity). Position 307 is a phosphoserine; by IKKB, MAPK8 and RPS6KB1 (Ser307). A phosphoserine mark is found at Ser318, Ser325, Ser340, and Ser343. Residues 349 to 358 (THAHRHRGSS) are compositionally biased toward basic residues. 2 stretches are compositionally biased toward low complexity: residues 378-399 (SPSATSPVSLSSSSTSGHGSTS) and 407-419 (SSASVSGSPSDGG). Ser414 bears the Phosphoserine mark. Phosphothreonine occurs at positions 441 and 448. Tyr460 is subject to Phosphotyrosine; by INSR. The short motif at 460 to 463 (YICM) is the YXXM motif 1 element. At Thr502 the chain carries Phosphothreonine; by CK2. The disordered stretch occupies residues 520–539 (THSAGTSPTISHQKTPSQSS). Phosphoserine; by RPS6KB1 is present on Ser522. Residues 522-539 (SAGTSPTISHQKTPSQSS) are compositionally biased toward polar residues. Short sequence motifs (YXXM motif) lie at residues 546–549 (YTEM) and 608–611 (YMPM). The residue at position 608 (Tyr608) is a Phosphotyrosine; by INSR. Position 612 is a phosphoserine (Ser612). Tyr628 is subject to Phosphotyrosine; by INSR. The YXXM motif 4 signature appears at 628-631 (YMPM). Ser632 carries the phosphoserine; by RPS6KB1 and ROCK2 modification. At Tyr658 the chain carries Phosphotyrosine. The short motif at 658–661 (YMMM) is the YXXM motif 5 element. A compositionally biased stretch (low complexity) spans 669–689 (PDIGGGSCSSSSISAAPSGSS). The interval 669–720 (PDIGGGSCSSSSISAAPSGSSYGKPWTNGVGGHHTHALPHAKPPVESGGGKL) is disordered. Positions 727–730 (YMNM) match the YXXM motif 6 motif. The interval 766-921 (FKHTQRPGEP…ATSRSSPSVR (156 aa)) is disordered. Residues 771-780 (RPGEPEEGAR) are compositionally biased toward basic and acidic residues. Low complexity-rich tracts occupy residues 785 to 794 (RLSSSSGRLR), 801 to 810 (DSSSSTSSDS), and 872 to 881 (QQQQQQQQQQ). Ser789 carries the post-translational modification Phosphoserine; by AMPK and SIK2. A Phosphoserine modification is found at Ser891. A phosphotyrosine; by INSR mark is found at Tyr895, Tyr939, and Tyr987. The tract at residues 895-897 (YVN) is GRB2-binding. 3 short sequence motifs (YXXM motif) span residues 939 to 942 (YMNM), 987 to 990 (YMTM), and 1010 to 1013 (YADM). Residues 1024-1165 (LPRTTGAAPP…SAPGCGAAGG (142 aa)) form a disordered region. A compositionally biased stretch (low complexity) spans 1025-1046 (PRTTGAAPPPSSTASASASVTP). Positions 1072–1084 (TRVNLSPNHNQSA) are enriched in polar residues. Ser1099 is subject to Phosphoserine. At Ser1100 the chain carries Phosphoserine; by RPS6KB1. A compositionally biased stretch (polar residues) spans 1101-1114 (ETFSAPTRAANTVS). Over residues 1118–1128 (GAAGGGSGGGS) the composition is skewed to gly residues. At Tyr1172 the chain carries Phosphotyrosine; by INSR. Residues 1177-1235 (LVKDVKQHPQDCPSQQQSLPPPPPHQPLGSNEGSSPRRSSEDLSTYASINFQKQPEDRQ) are disordered. Lys1179 is covalently cross-linked (Glycyl lysine isopeptide (Lys-Gly) (interchain with G-Cter in ubiquitin)). A compositionally biased stretch (polar residues) spans 1204–1229 (LGSNEGSSPRRSSEDLSTYASINFQK). Phosphotyrosine; by INSR is present on Tyr1222.

As to quaternary structure, interacts with SOCS7. Interacts (via IRS-type PTB domain) with IGF1R and INSR (via the tyrosine-phosphorylated NPXY motif). Interacts with UBTF, FER and PIK3CA. Interacts (via phosphorylated YXXM motifs) with PIK3R1. Interacts with ROCK1. Interacts (via PH domain) with PHIP. Interacts with GRB2. Interacts with ALK. Interacts with EIF2AK2/PKR. Interacts with GKAP1. Interacts with DGKZ in the absence of insulin; insulin stimulation decreases this interaction. Found in a ternary complex with DGKZ and PIP5K1A in the absence of insulin stimulation. Interacts with SQSTM1; the interaction is disrupted by the presence of tensin TNS2. Interacts with NCK1 (via SH2 domain). Interacts with NCK2 (via SH3 domain). Interacts with SH2B1; this interaction enhances leptin-induced activation of the PI3-kinase pathway. Interacts with DVL2; this interaction promotes the Wnt/beta-catenin signaling pathway. Interacts with JAK1. Serine phosphorylation of IRS1 is a mechanism for insulin resistance. Ser-307 phosphorylation inhibits insulin action through disruption of IRS1 interaction with the insulin receptor, and Ser-789 phosphorylation is increased in the liver of insulin-resistant rats. Phosphorylation of Tyr-895 is required for GRB2-binding. Phosphorylated by ALK. Phosphorylated at Ser-265, Ser-302, Ser-632 and Ser-1100 by RPS6KB1; phosphorylation induces accelerated degradation of IRS1. Phosphorylated on tyrosine residues in response to insulin. In skeletal muscles, dephosphorylated on Tyr-608 by TNS2 under anabolic conditions; dephosphorylation results in the proteasomal degradation of IRS1. Post-translationally, ubiquitinated by the Cul7-RING(FBXW8) complex in a mTOR-dependent manner, leading to its degradation: the Cul7-RING(FBXW8) complex recognizes and binds IRS1 previously phosphorylated by S6 kinase (RPS6KB1 or RPS6KB2). Ubiquitinated by TRAF4 through 'Lys-29' linkage; this ubiquitination regulates the interaction of IRS1 with IGFR and IRS1 tyrosine phosphorylation upon IGF1 stimulation. In terms of processing, S-nitrosylation at by BLVRB inhibits its activity.

The protein localises to the cytoplasm. The protein resides in the nucleus. In terms of biological role, signaling adapter protein that participates in the signal transduction from two prominent receptor tyrosine kinases, insulin receptor/INSR and insulin-like growth factor I receptor/IGF1R. Plays therefore an important role in development, growth, glucose homeostasis as well as lipid metabolism. Upon phosphorylation by the insulin receptor, functions as a signaling scaffold that propagates insulin action through binding to SH2 domain-containing proteins including the p85 regulatory subunit of PI3K, NCK1, NCK2, GRB2 or SHP2. Recruitment of GRB2 leads to the activation of the guanine nucleotide exchange factor SOS1 which in turn triggers the Ras/Raf/MEK/MAPK signaling cascade. Activation of the PI3K/AKT pathway is responsible for most of insulin metabolic effects in the cell, and the Ras/Raf/MEK/MAPK is involved in the regulation of gene expression and in cooperation with the PI3K pathway regulates cell growth and differentiation. Acts a positive regulator of the Wnt/beta-catenin signaling pathway through suppression of DVL2 autophagy-mediated degradation leading to cell proliferation. This Rattus norvegicus (Rat) protein is Insulin receptor substrate 1 (Irs1).